A 353-amino-acid polypeptide reads, in one-letter code: Photosystem II protein D1 (353 aa).

Position 2 is an N-acetylthreonine (T2). Phosphothreonine is present on T2. Helical transmembrane passes span Y29–S46, H118–L133, and W142–A156. A chlorophyll a-binding site is contributed by H118. Y126 lines the pheophytin a pocket. [CaMn4O5] cluster-binding residues include D170 and E189. The helical transmembrane segment at F197–L218 threads the bilayer. A chlorophyll a-binding site is contributed by H198. Residues H215 and S264–F265 contribute to the a quinone site. Residue H215 coordinates Fe cation. A Fe cation-binding site is contributed by H272. The chain crosses the membrane as a helical span at residues F274–L288. [CaMn4O5] cluster-binding residues include H332, E333, D342, and A344. Residues S345–G353 constitute a propeptide that is removed on maturation.

This sequence belongs to the reaction center PufL/M/PsbA/D family. As to quaternary structure, PSII is composed of 1 copy each of membrane proteins PsbA, PsbB, PsbC, PsbD, PsbE, PsbF, PsbH, PsbI, PsbJ, PsbK, PsbL, PsbM, PsbT, PsbX, PsbY, PsbZ, Psb30/Ycf12, at least 3 peripheral proteins of the oxygen-evolving complex and a large number of cofactors. It forms dimeric complexes. Requires The D1/D2 heterodimer binds P680, chlorophylls that are the primary electron donor of PSII, and subsequent electron acceptors. It shares a non-heme iron and each subunit binds pheophytin, quinone, additional chlorophylls, carotenoids and lipids. D1 provides most of the ligands for the Mn4-Ca-O5 cluster of the oxygen-evolving complex (OEC). There is also a Cl(-1) ion associated with D1 and D2, which is required for oxygen evolution. The PSII complex binds additional chlorophylls, carotenoids and specific lipids. as cofactor. Tyr-161 forms a radical intermediate that is referred to as redox-active TyrZ, YZ or Y-Z. Post-translationally, C-terminally processed by CTPA; processing is essential to allow assembly of the oxygen-evolving complex and thus photosynthetic growth.

The protein resides in the plastid. Its subcellular location is the chloroplast thylakoid membrane. It carries out the reaction 2 a plastoquinone + 4 hnu + 2 H2O = 2 a plastoquinol + O2. Photosystem II (PSII) is a light-driven water:plastoquinone oxidoreductase that uses light energy to abstract electrons from H(2)O, generating O(2) and a proton gradient subsequently used for ATP formation. It consists of a core antenna complex that captures photons, and an electron transfer chain that converts photonic excitation into a charge separation. The D1/D2 (PsbA/PsbD) reaction center heterodimer binds P680, the primary electron donor of PSII as well as several subsequent electron acceptors. In Tupiella akineta (Green alga), this protein is Photosystem II protein D1.